A 312-amino-acid polypeptide reads, in one-letter code: Aspartate carbamoyltransferase catalytic subunit (312 aa).

Carbamoyl phosphate-binding residues include arginine 58 and threonine 59. Lysine 86 is an L-aspartate binding site. Carbamoyl phosphate-binding residues include arginine 108, histidine 136, and glutamine 139. The L-aspartate site is built by arginine 169 and arginine 223. 2 residues coordinate carbamoyl phosphate: glycine 264 and proline 265.

The protein belongs to the aspartate/ornithine carbamoyltransferase superfamily. ATCase family. In terms of assembly, heterododecamer (2C3:3R2) of six catalytic PyrB chains organized as two trimers (C3), and six regulatory PyrI chains organized as three dimers (R2).

The catalysed reaction is carbamoyl phosphate + L-aspartate = N-carbamoyl-L-aspartate + phosphate + H(+). It participates in pyrimidine metabolism; UMP biosynthesis via de novo pathway; (S)-dihydroorotate from bicarbonate: step 2/3. Catalyzes the condensation of carbamoyl phosphate and aspartate to form carbamoyl aspartate and inorganic phosphate, the committed step in the de novo pyrimidine nucleotide biosynthesis pathway. This is Aspartate carbamoyltransferase catalytic subunit from Syntrophomonas wolfei subsp. wolfei (strain DSM 2245B / Goettingen).